The chain runs to 428 residues: Immunoglobulin superfamily containing leucine-rich repeat protein (428 aa).

Residues 1 to 18 form the signal peptide; that stretch reads MQELHLLWWALLLGLAQA. The 32-residue stretch at 19–50 folds into the LRRNT domain; sequence CPEPCDCGEKYGFQIADCAYRDLEAVPPGFPA. An N-linked (GlcNAc...) asparagine glycan is attached at Asn-51. LRR repeat units lie at residues 51–72, 75–96, 99–122, 123–144, and 147–168; these read NVTA…AFRE, LLQS…ALAS, HLKS…HNLS, ALQL…AFRS, and ALRS…TFTP. Positions 180–231 constitute an LRRCT domain; sequence NPFDCTCGIVWLKTWALATAVSIPEQDNIACTSPHVLKGTPLSRLPPLPCSA. The 112-residue stretch at 232–343 folds into the Ig-like domain; sequence PSVQLSYQPS…GSAESSVDVA (112 aa). A disulfide bridge links Cys-257 with Cys-327. N-linked (GlcNAc...) asparagine glycosylation is present at Asn-309.

It localises to the secreted. This Pongo abelii (Sumatran orangutan) protein is Immunoglobulin superfamily containing leucine-rich repeat protein (ISLR).